Reading from the N-terminus, the 110-residue chain is Large ribosomal subunit protein uL22 (110 aa).

It belongs to the universal ribosomal protein uL22 family. As to quaternary structure, part of the 50S ribosomal subunit.

This protein binds specifically to 23S rRNA; its binding is stimulated by other ribosomal proteins, e.g. L4, L17, and L20. It is important during the early stages of 50S assembly. It makes multiple contacts with different domains of the 23S rRNA in the assembled 50S subunit and ribosome. In terms of biological role, the globular domain of the protein is located near the polypeptide exit tunnel on the outside of the subunit, while an extended beta-hairpin is found that lines the wall of the exit tunnel in the center of the 70S ribosome. This chain is Large ribosomal subunit protein uL22, found in Methylococcus capsulatus (strain ATCC 33009 / NCIMB 11132 / Bath).